The sequence spans 597 residues: DNA primase (597 aa).

Residues cysteine 40, histidine 43, cysteine 61, and cysteine 64 each contribute to the Zn(2+) site. The segment at 40 to 64 adopts a CHC2-type zinc-finger fold; that stretch reads CPFHGEKTPSFSVSPEKQIFHCFGC. In terms of domain architecture, Toprim spans 262–342; it reads QEALLVEGFA…RVKVASLPNG (81 aa). Mg(2+)-binding residues include glutamate 268, aspartate 311, and aspartate 313. Residues 429-447 are compositionally biased toward basic and acidic residues; it reads LSRSQRERTKPREAPDGET. Residues 429–448 form a disordered region; sequence LSRSQRERTKPREAPDGETA.

This sequence belongs to the DnaG primase family. Monomer. Interacts with replicative helicase DnaB, as DnaB(6):DnaG(3). A stable complex DnaI(6):DnaB(6):DnaG(3) fragment can be isolated; DnaI and DnaG do not contact each other (DnaI in this complex is derived from B.subtilis). Zn(2+) serves as cofactor. Mg(2+) is required as a cofactor.

It catalyses the reaction ssDNA + n NTP = ssDNA/pppN(pN)n-1 hybrid + (n-1) diphosphate.. In terms of biological role, RNA polymerase that catalyzes the synthesis of short RNA molecules used as primers for DNA polymerase during DNA replication. The sequence is that of DNA primase from Geobacillus stearothermophilus (Bacillus stearothermophilus).